A 93-amino-acid polypeptide reads, in one-letter code: MASEKSQNVQDVFLNHVRKSKTPVTVFLVNGVKLQGIITWFDNFSVLLRRDGHTQLVYKHAISTVMPGAPIQLFDATKPEGDLGRDTAAYSDE.

Positions 11–71 (DVFLNHVRKS…ISTVMPGAPI (61 aa)) constitute a Sm domain.

It belongs to the Hfq family. Homohexamer.

In terms of biological role, RNA chaperone that binds small regulatory RNA (sRNAs) and mRNAs to facilitate mRNA translational regulation in response to envelope stress, environmental stress and changes in metabolite concentrations. Also binds with high specificity to tRNAs. In Granulibacter bethesdensis (strain ATCC BAA-1260 / CGDNIH1), this protein is RNA-binding protein Hfq.